Here is a 564-residue protein sequence, read N- to C-terminus: Ribulokinase (564 aa).

The protein belongs to the ribulokinase family.

The enzyme catalyses D-ribulose + ATP = D-ribulose 5-phosphate + ADP + H(+). It catalyses the reaction L-ribulose + ATP = L-ribulose 5-phosphate + ADP + H(+). The protein operates within carbohydrate degradation; L-arabinose degradation via L-ribulose; D-xylulose 5-phosphate from L-arabinose (bacterial route): step 2/3. The protein is Ribulokinase of Anoxybacillus flavithermus (strain DSM 21510 / WK1).